Consider the following 492-residue polypeptide: Ketol-acid reductoisomerase (NADP(+)) (492 aa).

The KARI N-terminal Rossmann domain maps to 15–208 (AQLGKCRFMA…GGHRAGVLES (194 aa)). Residues 45-48 (CGAQ), Arg-68, Arg-76, Ser-78, and 108-110 (DKQ) each bind NADP(+). His-132 is a catalytic residue. Gly-158 contributes to the NADP(+) binding site. 2 consecutive KARI C-terminal knotted domains span residues 209 to 344 (SFVA…NAPQ) and 345 to 485 (FEGK…MTDM). Positions 217, 221, 389, and 393 each coordinate Mg(2+). Ser-414 provides a ligand contact to substrate.

This sequence belongs to the ketol-acid reductoisomerase family. It depends on Mg(2+) as a cofactor.

It carries out the reaction (2R)-2,3-dihydroxy-3-methylbutanoate + NADP(+) = (2S)-2-acetolactate + NADPH + H(+). The catalysed reaction is (2R,3R)-2,3-dihydroxy-3-methylpentanoate + NADP(+) = (S)-2-ethyl-2-hydroxy-3-oxobutanoate + NADPH + H(+). The protein operates within amino-acid biosynthesis; L-isoleucine biosynthesis; L-isoleucine from 2-oxobutanoate: step 2/4. It functions in the pathway amino-acid biosynthesis; L-valine biosynthesis; L-valine from pyruvate: step 2/4. Involved in the biosynthesis of branched-chain amino acids (BCAA). Catalyzes an alkyl-migration followed by a ketol-acid reduction of (S)-2-acetolactate (S2AL) to yield (R)-2,3-dihydroxy-isovalerate. In the isomerase reaction, S2AL is rearranged via a Mg-dependent methyl migration to produce 3-hydroxy-3-methyl-2-ketobutyrate (HMKB). In the reductase reaction, this 2-ketoacid undergoes a metal-dependent reduction by NADPH to yield (R)-2,3-dihydroxy-isovalerate. This chain is Ketol-acid reductoisomerase (NADP(+)), found in Yersinia pseudotuberculosis serotype O:3 (strain YPIII).